Reading from the N-terminus, the 117-residue chain is V-type sodium ATPase subunit F (117 aa).

Residues 1-20 (MARILTRIKEAEENNQKKEE) form a disordered region. The span at 7 to 20 (RIKEAEENNQKKEE) shows a compositional bias: basic and acidic residues.

Belongs to the V-ATPase G subunit family.

In terms of biological role, involved in ATP-driven sodium extrusion. This chain is V-type sodium ATPase subunit F (ntpF), found in Enterococcus hirae (strain ATCC 9790 / DSM 20160 / JCM 8729 / LMG 6399 / NBRC 3181 / NCIMB 6459 / NCDO 1258 / NCTC 12367 / WDCM 00089 / R).